The following is a 205-amino-acid chain: Large ribosomal subunit protein uL3 (205 aa).

The interval 126–150 (GGPKTHGQSDRHRAPGSISSTTTPG) is disordered.

The protein belongs to the universal ribosomal protein uL3 family. Part of the 50S ribosomal subunit. Forms a cluster with proteins L14 and L19.

One of the primary rRNA binding proteins, it binds directly near the 3'-end of the 23S rRNA, where it nucleates assembly of the 50S subunit. The protein is Large ribosomal subunit protein uL3 of Dehalococcoides mccartyi (strain ATCC BAA-2266 / KCTC 15142 / 195) (Dehalococcoides ethenogenes (strain 195)).